The following is a 295-amino-acid chain: Glutamyl-Q tRNA(Asp) synthetase (295 aa).

Residues 9-13 and Glu45 contribute to the L-glutamate site; that span reads RFAPT. Positions 12 to 22 match the 'HIGH' region motif; the sequence is PTPSGYLHFGS. Zn(2+)-binding residues include Cys101, Cys103, Tyr115, and Cys119. 2 residues coordinate L-glutamate: Tyr172 and Arg190. The short motif at 228–232 is the 'KMSKS' region element; the sequence is KLGKS. Lys231 contacts ATP.

This sequence belongs to the class-I aminoacyl-tRNA synthetase family. GluQ subfamily. It depends on Zn(2+) as a cofactor.

Functionally, catalyzes the tRNA-independent activation of glutamate in presence of ATP and the subsequent transfer of glutamate onto a tRNA(Asp). Glutamate is transferred on the 2-amino-5-(4,5-dihydroxy-2-cyclopenten-1-yl) moiety of the queuosine in the wobble position of the QUC anticodon. This chain is Glutamyl-Q tRNA(Asp) synthetase, found in Pseudomonas syringae pv. tomato (strain ATCC BAA-871 / DC3000).